A 322-amino-acid polypeptide reads, in one-letter code: tRNA U34 carboxymethyltransferase (322 aa).

Carboxy-S-adenosyl-L-methionine is bound by residues K92, W106, K111, G131, 153–155, 181–182, M196, Y200, and R315; these read DPS and VE.

This sequence belongs to the class I-like SAM-binding methyltransferase superfamily. CmoB family. Homotetramer.

It catalyses the reaction carboxy-S-adenosyl-L-methionine + 5-hydroxyuridine(34) in tRNA = 5-carboxymethoxyuridine(34) in tRNA + S-adenosyl-L-homocysteine + H(+). In terms of biological role, catalyzes carboxymethyl transfer from carboxy-S-adenosyl-L-methionine (Cx-SAM) to 5-hydroxyuridine (ho5U) to form 5-carboxymethoxyuridine (cmo5U) at position 34 in tRNAs. The polypeptide is tRNA U34 carboxymethyltransferase (Pseudoalteromonas translucida (strain TAC 125)).